The sequence spans 298 residues: Mitochondrial dicarboxylate transporter (298 aa).

3 Solcar repeats span residues 11–95, 103–195, and 205–289; these read KNIK…LKEN, TNMA…FKNY, and SKNY…LKKH. 6 consecutive transmembrane segments (helical) span residues 17-37, 58-76, 105-126, 170-189, 211-231, and 265-283; these read WWYG…LDLA, ILAN…AAVL, MAYL…GNFA, GWKP…VVTY, LTAS…ADVM, and WLPS…FFAI.

The protein belongs to the mitochondrial carrier (TC 2.A.29) family. In terms of assembly, homodimer. Binds to the TIM22 translocation complex during import.

The protein resides in the mitochondrion inner membrane. Functionally, mitochondrial dicarboxylic transporter catalyzing the exchange of dicarboxylic acids like malate and succinate for inorganic phosphate. Required for growth on ethanol and acetate. The polypeptide is Mitochondrial dicarboxylate transporter (DIC1) (Saccharomyces cerevisiae (strain ATCC 204508 / S288c) (Baker's yeast)).